We begin with the raw amino-acid sequence, 348 residues long: Uroporphyrinogen decarboxylase (348 aa).

Substrate contacts are provided by residues Arg-29–Arg-33, Asp-79, Tyr-155, Thr-210, and His-326.

The protein belongs to the uroporphyrinogen decarboxylase family. In terms of assembly, homodimer.

The protein resides in the cytoplasm. It carries out the reaction uroporphyrinogen III + 4 H(+) = coproporphyrinogen III + 4 CO2. The protein operates within porphyrin-containing compound metabolism; protoporphyrin-IX biosynthesis; coproporphyrinogen-III from 5-aminolevulinate: step 4/4. Functionally, catalyzes the decarboxylation of four acetate groups of uroporphyrinogen-III to yield coproporphyrinogen-III. This is Uroporphyrinogen decarboxylase from Rhodospirillum rubrum (strain ATCC 11170 / ATH 1.1.1 / DSM 467 / LMG 4362 / NCIMB 8255 / S1).